We begin with the raw amino-acid sequence, 157 residues long: Transcriptional regulator AzlB (157 aa).

Residues 5–66 (LDETDKAILR…IVDEKKLGIE (62 aa)) form the HTH asnC-type domain. A DNA-binding region (H-T-H motif) is located at residues 24 to 43 (NLNLSKKIGLSPSACLARTK).

Functionally, transcriptional repressor of the azlBCD operon involved in branched-chain amino acid transport. The polypeptide is Transcriptional regulator AzlB (azlB) (Bacillus subtilis (strain 168)).